The chain runs to 77 residues: Large ribosomal subunit protein bL28 (77 aa).

This sequence belongs to the bacterial ribosomal protein bL28 family.

The sequence is that of Large ribosomal subunit protein bL28 from Karelsulcia muelleri (strain GWSS) (Sulcia muelleri).